Here is a 1383-residue protein sequence, read N- to C-terminus: DNA-directed RNA polymerase subunit beta (1383 aa).

This sequence belongs to the RNA polymerase beta chain family. As to quaternary structure, the RNAP catalytic core consists of 2 alpha, 1 beta, 1 beta' and 1 omega subunit. When a sigma factor is associated with the core the holoenzyme is formed, which can initiate transcription.

The enzyme catalyses RNA(n) + a ribonucleoside 5'-triphosphate = RNA(n+1) + diphosphate. DNA-dependent RNA polymerase catalyzes the transcription of DNA into RNA using the four ribonucleoside triphosphates as substrates. The protein is DNA-directed RNA polymerase subunit beta of Xanthomonas euvesicatoria pv. vesicatoria (strain 85-10) (Xanthomonas campestris pv. vesicatoria).